Reading from the N-terminus, the 235-residue chain is Small ribosomal subunit protein uS10m (235 aa).

Residues 1-19 (MLRTSVRSPLLYRCLSKRF) constitute a mitochondrion transit peptide.

It belongs to the universal ribosomal protein uS10 family. In terms of assembly, part of the mitochondrial small ribosomal subunit.

It localises to the mitochondrion. Functionally, involved in mitochondrial genome encoded proteins translation. Involved in the binding of tRNA to the ribosomes. In Candida glabrata (strain ATCC 2001 / BCRC 20586 / JCM 3761 / NBRC 0622 / NRRL Y-65 / CBS 138) (Yeast), this protein is Small ribosomal subunit protein uS10m (RSM10).